The following is a 40-amino-acid chain: Muscarinic m1-toxin4 (40 aa).

C3 and C24 are joined by a disulfide.

This sequence belongs to the three-finger toxin family. Short-chain subfamily. Aminergic toxin sub-subfamily. In terms of assembly, monomer. Contains 4 disulfide bonds. As to expression, expressed by the venom gland.

It localises to the secreted. Functionally, binds irreversibly and specifically to M1 (CHRM1) muscarinic acetylcholine receptors, blocking further binding of antagonists and preventing the action of agonists. In Dendroaspis angusticeps (Eastern green mamba), this protein is Muscarinic m1-toxin4.